The primary structure comprises 217 residues: 3,4-dihydroxy-2-butanone 4-phosphate synthase (217 aa).

Residues 37 to 38, D42, 150 to 154, and E174 contribute to the D-ribulose 5-phosphate site; these read RE and RGGHT. Mg(2+) is bound at residue E38. Mg(2+) is bound at residue H153.

This sequence belongs to the DHBP synthase family. Homodimer. Mg(2+) serves as cofactor. The cofactor is Mn(2+).

It catalyses the reaction D-ribulose 5-phosphate = (2S)-2-hydroxy-3-oxobutyl phosphate + formate + H(+). The protein operates within cofactor biosynthesis; riboflavin biosynthesis; 2-hydroxy-3-oxobutyl phosphate from D-ribulose 5-phosphate: step 1/1. Catalyzes the conversion of D-ribulose 5-phosphate to formate and 3,4-dihydroxy-2-butanone 4-phosphate. This chain is 3,4-dihydroxy-2-butanone 4-phosphate synthase, found in Shigella boydii serotype 18 (strain CDC 3083-94 / BS512).